The following is a 308-amino-acid chain: Putative glutamine amidotransferase Rv2859c (308 aa).

A disordered region spans residues 1–62; that stretch reads MDLSASRSDG…ASPRLRSPLG (62 aa). Low complexity-rich tracts occupy residues 13 to 24, 31 to 42, and 49 to 61; these read PLRPASPRLRSP and PLRPASPRLRSPL. In terms of domain architecture, Glutamine amidotransferase type-1 spans 78 to 301; sequence RTGVWDIPAG…VDAASGYAGR (224 aa). C177 functions as the Nucleophile in the catalytic mechanism. Catalysis depends on residues H277 and E279. An Isoglutamyl lysine isopeptide (Lys-Gln) (interchain with Q-Cter in protein Pup) cross-link involves residue K289.

The polypeptide is Putative glutamine amidotransferase Rv2859c (Mycobacterium tuberculosis (strain ATCC 25618 / H37Rv)).